The following is a 426-amino-acid chain: UPF0329 protein ECU06_0040 (426 aa).

The segment covering 136–172 (RQRKREEETERSVKELVGDEEKAKSKEEKAKSKEEKA) has biased composition (basic and acidic residues). Residues 136-230 (RQRKREEETE…GGKKKSKGGR (95 aa)) form a disordered region. The span at 220-230 (KGGKKKSKGGR) shows a compositional bias: basic residues.

Belongs to the UPF0329 family.

The chain is UPF0329 protein ECU06_0040 from Encephalitozoon cuniculi (strain GB-M1) (Microsporidian parasite).